The sequence spans 284 residues: Probable tRNA-splicing endonuclease subunit sen34 (284 aa).

Active-site residues include tyrosine 206, histidine 214, and lysine 245.

Belongs to the tRNA-intron endonuclease family. Heterotetramer composed of sen2, sen15, sen34 and sen54. Interacts directly with sen15.

The enzyme catalyses pretRNA = a 3'-half-tRNA molecule with a 5'-OH end + a 5'-half-tRNA molecule with a 2',3'-cyclic phosphate end + an intron with a 2',3'-cyclic phosphate and a 5'-hydroxyl terminus.. Functionally, constitutes one of the two catalytic subunit of the tRNA-splicing endonuclease complex, a complex responsible for identification and cleavage of the splice sites in pre-tRNA. It cleaves pre-tRNA at the 5'- and 3'-splice sites to release the intron. The products are an intron and two tRNA half-molecules bearing 2',3'-cyclic phosphate and 5'-OH termini. There are no conserved sequences at the splice sites, but the intron is invariably located at the same site in the gene, placing the splice sites an invariant distance from the constant structural features of the tRNA body. It probably carries the active site for 3'-splice site cleavage. The sequence is that of Probable tRNA-splicing endonuclease subunit sen34 (sen34) from Schizosaccharomyces pombe (strain 972 / ATCC 24843) (Fission yeast).